Consider the following 871-residue polypeptide: Dual O-methyltransferase/FAD-dependent monooxygenase CTB3 (871 aa).

Positions 1–429 (MMQFQRDLEA…GLLTVRSAGQ (429 aa)) are O-methyltransferase. Residue Asp279 coordinates S-adenosyl-L-methionine. The active-site Proton acceptor is His331. The segment at 430–871 (TALSGTNTLT…NLVDCSEFVF (442 aa)) is FAD-dependent monooxygenase. FAD is bound by residues Glu485, Arg569, and Ala806.

The protein in the C-terminal section; belongs to the paxM FAD-dependent monooxygenase family. In the N-terminal section; belongs to the class I-like SAM-binding methyltransferase superfamily. Cation-independent O-methyltransferase family. COMT subfamily.

It carries out the reaction nor-toralactone + S-adenosyl-L-methionine = toralactone + S-adenosyl-L-homocysteine + H(+). The enzyme catalyses toralactone + NADH + O2 + H(+) = 1-(3,4,5-trihydroxy-7-methoxynaphthalen-2-yl)propan-2-one + CO2 + NAD(+). The protein operates within mycotoxin biosynthesis. Functionally, dual O-methyltransferase/FAD-dependent monooxygenase; part of the gene cluster that mediates the biosynthesis of cercosporin, a light-activated, non-host-selective toxin. The perylenequinone chromophore of cercosporin absorbs light energy to attain an electronically-activated triplet state and produces active oxygen species such as the hydroxyl radical, superoxide, hydrogen peroxide or singlet oxygen upon reaction with oxygen molecules. These reactive oxygen species cause damage to various cellular components including lipids, proteins and nucleic acids. The first step of cercosporin biosynthesis is performed by the polyketide synthase CTB1 which catalyzes the formation of nor-toralactone. The starter unit acyltransferase (SAT) domain of CTB1 initiates polyketide extension by the selective utilization of acetyl-CoA, which is elongated to the heptaketide in the beta-ketoacyl synthase (KS) domain by successive condensations with six malonyl units introduced by the malonyl acyltransferase (MAT) domain. The product template (PT) domain catalyzes C4-C9 and C2-C11 aldol cyclizations and dehydrations to a trihydroxynaphthalene, which is thought to be delivered to the thioesterase (TE) domain for product release. The bifunctional enzyme CTB3 then methylates nor-toralactone to toralactone before conducting an unusual oxidative aromatic ring opening. The O-methyltransferase CTB2 further methylates the nascent OH-6 of the CBT3 product, blocking further oxidation at this site before the reductase CTB6 reduces the 2-oxopropyl ketone at position C7, giving naphthalene. The FAD-dependent monooxygenase CTB5 in concert with the multicopper oxidase CTB12 are responsible for homodimerization of naphthalene with CTB7 installing the dioxepine moiety, finally producing cercosporin. The fasciclin domain-containing protein CTB11 might act with CTB5 and CTB12 whereas the roles of CTB9 and CTB10 have still to be elucidated. This is Dual O-methyltransferase/FAD-dependent monooxygenase CTB3 from Cercospora nicotianae (Barn spot disease fungus).